Reading from the N-terminus, the 664-residue chain is Macoilin (664 aa).

Transmembrane regions (helical) follow at residues 28–48, 75–95, 120–140, and 154–174; these read TFLY…DFVL, AFSV…LLFI, VCLP…AIRF, and FAAH…KSYV. The segment covering 253 to 265 has biased composition (basic and acidic residues); the sequence is REKGKEKDKDAKK. A disordered region spans residues 253–274; that stretch reads REKGKEKDKDAKKHNLGINNNN. At Ser-305 the chain carries Phosphoserine. Polar residues predominate over residues 320 to 348; the sequence is KNYKNASGVVNSSPRSHSATNGSIPSSSS. Residues 320–375 are disordered; it reads KNYKNASGVVNSSPRSHSATNGSIPSSSSKNEKKQKCTSKSPSTHKDLMENCIPNN. An N-linked (GlcNAc...) asparagine glycan is attached at Asn-324. At Ser-332 the chain carries Phosphoserine. 2 N-linked (GlcNAc...) asparagine glycosylation sites follow: Asn-340 and Asn-452. The disordered stretch occupies residues 630 to 664; sequence TSPLSPVSPHYSSKFVETSPSGLDPNASVYQPLKK. Residues Ser-631 and Ser-634 each carry the phosphoserine modification. A glycan (N-linked (GlcNAc...) asparagine) is linked at Asn-655.

The protein belongs to the macoilin family.

The protein resides in the rough endoplasmic reticulum membrane. It localises to the nucleus membrane. Functionally, plays a role in the regulation of neuronal activity. This is Macoilin (MACO1) from Macaca mulatta (Rhesus macaque).